We begin with the raw amino-acid sequence, 496 residues long: Cytochrome P450 71B14 (496 aa).

The chain crosses the membrane as a helical span at residues 1 to 21; sequence MIWWFIVGASFFFAFILIAKD. Cys436 is a heme binding site.

It belongs to the cytochrome P450 family. It depends on heme as a cofactor.

Its subcellular location is the membrane. This Arabidopsis thaliana (Mouse-ear cress) protein is Cytochrome P450 71B14 (CYP71B14).